Consider the following 354-residue polypeptide: Envelope protein US28 (354 aa).

Residues 1–37 (MTPTTTTAELTTEFDYDEDATPCVFTDVLNQSKPVTL) lie on the Extracellular side of the membrane. Asn30 carries an N-linked (GlcNAc...) asparagine; by host glycan. A helical transmembrane segment spans residues 38–58 (FLYGVVFLFGSIGNFLVIFTI). Residues 59–69 (TWRRRIQCSGD) are Cytoplasmic-facing. The chain crosses the membrane as a helical span at residues 70–90 (VYFINLAAADLLFVCTLPLWM). The Extracellular segment spans residues 91-101 (QYLLDHNSLAS). A helical membrane pass occupies residues 102–122 (VPCTLLTACFYVAMFASLCFI). The Cytoplasmic portion of the chain corresponds to 123-145 (TEIALDRYYAIVYMRYRPVKQAC). Residues 146–166 (LFSIFWWIFAVIIAIPHFMVV) traverse the membrane as a helical segment. Residues 167 to 183 (TKKDNQCMTDYDYLEVS) lie on the Extracellular side of the membrane. A helical transmembrane segment spans residues 184-204 (YPIILNVELMLGAFVIPLSVI). At 205–228 (SYCYYRISRIVAVSQSRHKGRIVR) the chain is on the cytoplasmic side. The chain crosses the membrane as a helical span at residues 229 to 249 (VLIAVVLVFIIFWLPYHLTLF). Over 250 to 273 (VDTLKLLKWISSSCEFERSLKRAL) the chain is Extracellular. Residues 274-294 (ILTESLAFCHCCLNPLLYVFV) form a helical membrane-spanning segment. Topologically, residues 295-354 (GTKFRQELHCLLAEFRQRLFSRDVSWYHSMSFSRRGSPSRRETSSDTLSDEVCRVSQIIP) are cytoplasmic.

Belongs to the G-protein coupled receptor 1 family. In terms of assembly, interacts with host GPRASP1; this interaction targets US28 to lysosomes for degradation. Interacts with host CX3CL1/Fractalkine (via N-terminus). In terms of processing, phosphorylated. High phosphorylation occurs concomitantly with receptor endocytosis and correlate with low receptor presence at the plasma membrane.

The protein localises to the host cell membrane. Its function is as follows. Receptor for a C-C type chemokine. Binds to a great number of different CC-chemokines including CCL5/RANTES, CCL2/MCP-1, CCL3/MIP-1-alpha as well as CX3CL1/Fractalkine. Transduces signals resulting in the activation of MAP kinase signaling pathways and augmentation of intracellular calcium ion levels, leading to alterations in chemotactic behavior of vascular smooth muscle cells and macrophages. The US28 receptor also exhibits high levels of agonist-independent signaling activity and agonist-independent endocytosis. Interacts with the host Gi complex without activating it, thereby probably interfering with the chemokine-Gi signaling. May also function as a G protein sink to sequester G protein from the cell surface via internalization. Interacts with endogenous Gaq/11 subunits and thereby constitutively activates phospholipase C. The polypeptide is Envelope protein US28 (US28) (Human cytomegalovirus (strain Merlin) (HHV-5)).